The following is a 485-amino-acid chain: 4-alpha-glucanotransferase (485 aa).

It belongs to the disproportionating enzyme family.

The protein resides in the cytoplasm. The enzyme catalyses Transfers a segment of a (1-&gt;4)-alpha-D-glucan to a new position in an acceptor, which may be glucose or a (1-&gt;4)-alpha-D-glucan.. In Aquifex aeolicus (strain VF5), this protein is 4-alpha-glucanotransferase (malQ).